Reading from the N-terminus, the 655-residue chain is p-hydroxybenzoic acid efflux pump subunit AaeB (655 aa).

Transmembrane regions (helical) follow at residues 13-33 (FAVK…HFQL), 38-58 (WAVL…GGEP), 69-89 (LRII…IAMI), 93-113 (LLMI…SSLV), 121-141 (WGLA…EPLL), 152-172 (EIVI…PRSI), 370-390 (LFWL…IAVV), 407-427 (FIYG…VIIP), 431-451 (QSML…GIEV), 459-479 (MGAL…TFHF), and 482-502 (FLDS…VILL).

This sequence belongs to the aromatic acid exporter ArAE (TC 2.A.85) family.

Its subcellular location is the cell inner membrane. Its function is as follows. Forms an efflux pump with AaeA. Could function as a metabolic relief valve, allowing to eliminate certain compounds when they accumulate to high levels in the cell. The protein is p-hydroxybenzoic acid efflux pump subunit AaeB of Shigella boydii serotype 18 (strain CDC 3083-94 / BS512).